A 317-amino-acid polypeptide reads, in one-letter code: Ribosomal protein L11 methyltransferase (317 aa).

S-adenosyl-L-methionine contacts are provided by threonine 158, glycine 179, aspartate 201, and asparagine 244.

The protein belongs to the methyltransferase superfamily. PrmA family.

The protein localises to the cytoplasm. It catalyses the reaction L-lysyl-[protein] + 3 S-adenosyl-L-methionine = N(6),N(6),N(6)-trimethyl-L-lysyl-[protein] + 3 S-adenosyl-L-homocysteine + 3 H(+). Functionally, methylates ribosomal protein L11. The protein is Ribosomal protein L11 methyltransferase of Streptococcus uberis (strain ATCC BAA-854 / 0140J).